The sequence spans 232 residues: Putative membrane protein ORF8 (232 aa).

Residues 71 to 84 show a composition bias toward low complexity; that stretch reads GSSAASIPSAPTPD. The disordered stretch occupies residues 71–121; the sequence is GSSAASIPSAPTPDATRESPTGEPHRDRALSTETPTPEPSRDGGSTPEVLH. 2 consecutive transmembrane segments (helical) span residues 166–182 and 195–211; these read VFAR…GSVA and LVVT…WVIV.

Its subcellular location is the membrane. This chain is Putative membrane protein ORF8 (ORF8), found in Ictalurid herpesvirus 1 (strain Auburn) (IcHV-1).